The following is a 326-amino-acid chain: Eukaryotic translation initiation factor 3 subunit I (326 aa).

5 WD repeats span residues 8-47, 50-89, 145-184, 188-227, and 285-326; these read GHER…RLGT, GHQG…VIAS, MTES…KVVD, DHSA…CLKT, and GHFG…NIFE.

It belongs to the eIF-3 subunit I family. Component of the eukaryotic translation initiation factor 3 (eIF-3) complex. The eIF-3 complex interacts with pix.

The protein localises to the cytoplasm. Functionally, component of the eukaryotic translation initiation factor 3 (eIF-3) complex, which is involved in protein synthesis of a specialized repertoire of mRNAs and, together with other initiation factors, stimulates binding of mRNA and methionyl-tRNAi to the 40S ribosome. The eIF-3 complex specifically targets and initiates translation of a subset of mRNAs involved in cell proliferation. This Drosophila erecta (Fruit fly) protein is Eukaryotic translation initiation factor 3 subunit I.